Reading from the N-terminus, the 147-residue chain is Hemoglobin subunit beta (147 aa).

The region spanning 3 to 147 (HWTAEEKQII…VAHALARKYH (145 aa)) is the Globin domain. Heme b-binding residues include histidine 64 and histidine 93.

Heterotetramer of two alpha (or alpha-D) and two beta chains. As to expression, red blood cells.

In terms of biological role, involved in oxygen transport from the lung to the various peripheral tissues. The beta chain is a component of adult hemoglobin A and D. The sequence is that of Hemoglobin subunit beta from Aythya fuligula (Tufted duck).